The sequence spans 281 residues: MSLYQGDKALEALSLGKETQYHTHYDASLLQGVPRRLNRDSLSLTADNLPFHGGDIWTMYELSWLNSQGLPQVAIGHVELDATTENLIESKSFKLYLNSFNQTRFENWHIVEETLLKDLTACAKGRVHLTLYPLSHFTSQPIVDFVGECIDNQPIEIDNYQFDSQWLNGSTTDTLVEETLVSHLLKSNCLITHQPDWGSVMIQYKGKKIDREKLLRYLVSFRQHNEFHEQCVERIFHDIMTFCSPDTLTVYARYTRRGGLDINPWRSNCEFVPETGRLARQ.

Substrate is bound at residue 88-90 (IES). 90 to 91 (SK) serves as a coordination point for NADPH. The active-site Thioimide intermediate is the C189. Residue D196 is the Proton donor of the active site. 228–229 (HE) contacts substrate. 257 to 258 (RG) is an NADPH binding site.

This sequence belongs to the GTP cyclohydrolase I family. QueF type 2 subfamily. In terms of assembly, homodimer.

It is found in the cytoplasm. It catalyses the reaction 7-aminomethyl-7-carbaguanine + 2 NADP(+) = 7-cyano-7-deazaguanine + 2 NADPH + 3 H(+). It participates in tRNA modification; tRNA-queuosine biosynthesis. In terms of biological role, catalyzes the NADPH-dependent reduction of 7-cyano-7-deazaguanine (preQ0) to 7-aminomethyl-7-deazaguanine (preQ1). The chain is NADPH-dependent 7-cyano-7-deazaguanine reductase from Proteus mirabilis (strain HI4320).